The primary structure comprises 113 residues: UPF0122 protein MGAS10270_Spy1030 (113 aa).

Belongs to the UPF0122 family.

Might take part in the signal recognition particle (SRP) pathway. This is inferred from the conservation of its genetic proximity to ftsY/ffh. May be a regulatory protein. The polypeptide is UPF0122 protein MGAS10270_Spy1030 (Streptococcus pyogenes serotype M2 (strain MGAS10270)).